Consider the following 106-residue polypeptide: Thioredoxin (106 aa).

The region spanning 1-106 (GATVKVTNAT…RLAAFLDASL (106 aa)) is the Thioredoxin domain. Cysteine 31 and cysteine 34 form a disulfide bridge.

The protein belongs to the thioredoxin family.

Functionally, participates in various redox reactions through the reversible oxidation of its active center dithiol to a disulfide and catalyzes dithiol-disulfide exchange reactions. The protein is Thioredoxin (trxA) of Kitasatospora aureofaciens (Streptomyces aureofaciens).